A 175-amino-acid chain; its full sequence is Dof zinc finger protein DOF1.5 (175 aa).

Residues 29 to 57 (EEQQQQQQPELQATTAVRSPSSDLTAEKR) form a disordered region. The span at 37-52 (PELQATTAVRSPSSDL) shows a compositional bias: polar residues. A Dof-type zinc finger spans residues 62 to 116 (IPCPRCKSMETKFCYFNNYNVNQPRHFCKGCQRYWTAGGALRNVPVGAGRRKSKP). Cysteine 64, cysteine 67, cysteine 89, and cysteine 92 together coordinate Zn(2+). The short motif at 162–168 (PVKRLRC) is the Nuclear localization signal element.

The protein localises to the nucleus. Transcription factor that binds specifically to a 5'-AA[AG]G-3' consensus core sequence. Acts as a negative regulator in the phytochrome-mediated light responses. Controls phyB-mediated end-of-day response and the phyA-mediated anthocyanin accumulation. Not involved in direct flowering time regulation. The polypeptide is Dof zinc finger protein DOF1.5 (DOF1.5) (Arabidopsis thaliana (Mouse-ear cress)).